A 665-amino-acid polypeptide reads, in one-letter code: Intraflagellar transport protein 70A (665 aa).

TPR repeat units follow at residues 11-44 (DGEF…SPRS), 45-78 (RAGL…HPEL), 154-187 (TDGQ…SGYQ), 189-221 (DLSY…GIRQ), 393-424 (LTKQ…EKYI), 425-457 (PVLM…CNDH), and 459-492 (VWKL…HYDN). A coiled-coil region spans residues 508 to 535 (YIMTSQNEEAEELMRKIEKEEEQLSYDD). The TPR 8 repeat unit spans residues 544–577 (CIVNLVIGTLYCAKGNYEFGISRVIKSLEPYNKK).

The protein belongs to the TTC30/dfy-1/fleer family.

It localises to the cell projection. The protein resides in the cilium. In terms of biological role, required for polyglutamylation of axonemal tubulin. Plays a role in anterograde intraflagellar transport (IFT), the process by which cilia precursors are transported from the base of the cilium to the site of their incorporation at the tip. The sequence is that of Intraflagellar transport protein 70A from Homo sapiens (Human).